A 368-amino-acid polypeptide reads, in one-letter code: F-box only protein 28 (368 aa).

Residues 1–11 (MAAASEERMAE) are compositionally biased toward basic and acidic residues. The disordered stretch occupies residues 1–56 (MAAASEERMAEEGGGGHGDGGSCSAAGSAQRQPPAPPSQAPPPGSQAPAAPALAPD). The segment covering 12 to 21 (EGGGGHGDGG) has biased composition (gly residues). A compositionally biased stretch (low complexity) spans 22 to 32 (SCSAAGSAQRQ). Residues 33–45 (PPAPPSQAPPPGS) show a composition bias toward pro residues. The span at 46 to 55 (QAPAAPALAP) shows a compositional bias: low complexity. The 49-residue stretch at 61–109 (NNTLVALPIVAIENILSFMSYDEISQLRLVCKRMDLVCQRMLNQGFLKV) folds into the F-box domain. 2 positions are modified to phosphoserine: Ser-235 and Ser-242. Thr-270 carries the post-translational modification Phosphothreonine. Positions 328 to 368 (MESAVGTSSGSGQSEESPRKRRKATEAIDSLRKSKRLRNRK) are disordered. Position 344 is a phosphoserine (Ser-344).

In terms of assembly, part of a SCF (SKP1-cullin-F-box) protein ligase complex.

It is found in the chromosome. It localises to the centromere. The protein resides in the kinetochore. Its function is as follows. Probably recognizes and binds to some phosphorylated proteins and promotes their ubiquitination and degradation. This chain is F-box only protein 28 (Fbxo28), found in Mus musculus (Mouse).